Reading from the N-terminus, the 607-residue chain is UvrABC system protein C (607 aa).

The GIY-YIG domain occupies Asp12–Ile91. The UVR domain maps to Glu200–Ile235.

Belongs to the UvrC family. Interacts with UvrB in an incision complex.

The protein localises to the cytoplasm. Its function is as follows. The UvrABC repair system catalyzes the recognition and processing of DNA lesions. UvrC both incises the 5' and 3' sides of the lesion. The N-terminal half is responsible for the 3' incision and the C-terminal half is responsible for the 5' incision. This Carboxydothermus hydrogenoformans (strain ATCC BAA-161 / DSM 6008 / Z-2901) protein is UvrABC system protein C.